The sequence spans 277 residues: Probable endonuclease 4 (277 aa).

Zn(2+)-binding residues include His-70, His-108, Glu-143, Asp-176, His-179, His-210, Asp-223, His-225, and Glu-255.

Belongs to the AP endonuclease 2 family. Requires Zn(2+) as cofactor.

It catalyses the reaction Endonucleolytic cleavage to 5'-phosphooligonucleotide end-products.. In terms of biological role, endonuclease IV plays a role in DNA repair. It cleaves phosphodiester bonds at apurinic or apyrimidinic (AP) sites, generating a 3'-hydroxyl group and a 5'-terminal sugar phosphate. The chain is Probable endonuclease 4 from Mycoplasmopsis synoviae (strain 53) (Mycoplasma synoviae).